The primary structure comprises 427 residues: N-myc proto-oncogene protein (427 aa).

4 disordered regions span residues 45 to 79 (FELL…SVGL), 144 to 173 (EKLQ…SGRA), 195 to 255 (AAEG…STNK), and 297 to 349 (APSP…RNHN). Pro residues-rich tracts occupy residues 49–61 (PTPP…PAPG) and 152–167 (AAPP…PPVP). A compositionally biased stretch (low complexity) spans 210 to 221 (RASSSSSSSGDD). Positions 222-242 (TLSDSEDDEDEEEEDEEEEID) are enriched in acidic residues. A phosphoserine; by CK2 mark is found at serine 224 and serine 226. The bHLH domain occupies 343–396 (ERRRNHNILERQRANDLRSSFLTLRDHVLSELVQNEKAAKVVILKKATEYVHSL). The tract at residues 396–417 (LQAEEQKLLLEKEKLQARQEQL) is leucine-zipper.

Efficient DNA binding requires dimerization with another bHLH protein. Binds DNA as a heterodimer with MAX.

The protein resides in the nucleus. This Serinus canaria (Island canary) protein is N-myc proto-oncogene protein (MYCN).